The sequence spans 182 residues: Peptidyl-tRNA hydrolase (182 aa).

Residue tyrosine 14 participates in tRNA binding. The active-site Proton acceptor is histidine 19. TRNA is bound by residues phenylalanine 64, asparagine 66, and asparagine 112.

The protein belongs to the PTH family. As to quaternary structure, monomer.

Its subcellular location is the cytoplasm. It carries out the reaction an N-acyl-L-alpha-aminoacyl-tRNA + H2O = an N-acyl-L-amino acid + a tRNA + H(+). Functionally, hydrolyzes ribosome-free peptidyl-tRNAs (with 1 or more amino acids incorporated), which drop off the ribosome during protein synthesis, or as a result of ribosome stalling. Its function is as follows. Catalyzes the release of premature peptidyl moieties from peptidyl-tRNA molecules trapped in stalled 50S ribosomal subunits, and thus maintains levels of free tRNAs and 50S ribosomes. This Wolbachia pipientis wMel protein is Peptidyl-tRNA hydrolase.